Here is a 34-residue protein sequence, read N- to C-terminus: Cytochrome b6-f complex subunit 8 (34 aa).

A helical transmembrane segment spans residues Ile3–Val23.

Belongs to the PetN family. As to quaternary structure, the 4 large subunits of the cytochrome b6-f complex are cytochrome b6, subunit IV (17 kDa polypeptide, PetD), cytochrome f and the Rieske protein, while the 4 small subunits are PetG, PetL, PetM and PetN. The complex functions as a dimer.

It localises to the cellular thylakoid membrane. Its function is as follows. Component of the cytochrome b6-f complex, which mediates electron transfer between photosystem II (PSII) and photosystem I (PSI), cyclic electron flow around PSI, and state transitions. The chain is Cytochrome b6-f complex subunit 8 from Prochlorococcus marinus subsp. pastoris (strain CCMP1986 / NIES-2087 / MED4).